The chain runs to 181 residues: MRIVLLGPPGAGKGTQAAKLADKLGVPHISTGDLFRDNITNETELGVEAKRYLDAGDLVPSSLTNALVEDRIDQDDAKNGFILDGYPRSVEQAEALGDMLAARNLSLDAVIEFRVSEDELLSRLKGRGRADDTEEVILNRMKVYRDETAPLLDHYRAELKTVDAVGSLDEVFARALQALGR.

An ATP-binding site is contributed by 10–15; it reads GAGKGT. Residues 30-59 form an NMP region; sequence STGDLFRDNITNETELGVEAKRYLDAGDLV. AMP-binding positions include Thr-31, Arg-36, 57–59, 85–88, and Gln-92; these read DLV and GYPR. Residues 126-132 are LID; that stretch reads GRGRADD. Arg-127 contacts ATP. AMP contacts are provided by Arg-129 and Arg-140. Residue Gly-166 participates in ATP binding.

The protein belongs to the adenylate kinase family. As to quaternary structure, monomer.

The protein localises to the cytoplasm. The catalysed reaction is AMP + ATP = 2 ADP. It functions in the pathway purine metabolism; AMP biosynthesis via salvage pathway; AMP from ADP: step 1/1. Functionally, catalyzes the reversible transfer of the terminal phosphate group between ATP and AMP. Plays an important role in cellular energy homeostasis and in adenine nucleotide metabolism. The sequence is that of Adenylate kinase from Mycobacterium sp. (strain MCS).